The primary structure comprises 616 residues: Chaperone protein HscA (616 aa).

This sequence belongs to the heat shock protein 70 family.

In terms of biological role, chaperone involved in the maturation of iron-sulfur cluster-containing proteins. Has a low intrinsic ATPase activity which is markedly stimulated by HscB. Involved in the maturation of IscU. In Photorhabdus laumondii subsp. laumondii (strain DSM 15139 / CIP 105565 / TT01) (Photorhabdus luminescens subsp. laumondii), this protein is Chaperone protein HscA.